The primary structure comprises 318 residues: NADH-ubiquinone oxidoreductase chain 1 (318 aa).

A run of 8 helical transmembrane segments spans residues 1-21, 71-91, 101-121, 145-165, 172-192, 224-244, 253-273, and 294-314; these read MLPI…VAFL, LLIL…TPIP, LGLL…LWAG, VTLG…TMQL, HIWL…STLA, FFLA…IMFI, ELFL…FLWI, and LPLT…ISGI.

This sequence belongs to the complex I subunit 1 family.

The protein localises to the mitochondrion inner membrane. It carries out the reaction a ubiquinone + NADH + 5 H(+)(in) = a ubiquinol + NAD(+) + 4 H(+)(out). Its function is as follows. Core subunit of the mitochondrial membrane respiratory chain NADH dehydrogenase (Complex I) that is believed to belong to the minimal assembly required for catalysis. Complex I functions in the transfer of electrons from NADH to the respiratory chain. The immediate electron acceptor for the enzyme is believed to be ubiquinone. This Varanus rudicollis (Rough-necked monitor lizard) protein is NADH-ubiquinone oxidoreductase chain 1 (MT-ND1).